A 634-amino-acid polypeptide reads, in one-letter code: Kelch-like protein 22 (634 aa).

Residue alanine 2 is modified to N-acetylalanine. The BTB domain maps to 50–117 (FDVVLVVEGR…IYTSELELSL (68 aa)). Kelch repeat units follow at residues 299-349 (CVVG…VLNN), 350-399 (FVYL…VVGK), 400-446 (YIYA…TLQG), 448-493 (MYIT…ALLD), 494-544 (KLFV…VLDN), and 545-593 (RIYV…VLTL). Threonine 463 is subject to Phosphothreonine. Tyrosine 466 is modified (phosphotyrosine). Position 475 is a phosphothreonine (threonine 475). Residues 600 to 634 (EQPRGTPNRSQADADFASEVMSVSDWEEFDNSSED) form a disordered region. Threonine 605 carries the post-translational modification Phosphothreonine. Acidic residues predominate over residues 624 to 634 (DWEEFDNSSED).

In terms of assembly, component of the BCR(KLHL22) E3 ubiquitin ligase complex, at least composed of CUL3, KLHL22 and RBX1. Interacts with PLK1. Interacts with DEPDC5 (via DEP domain); the interaction depends on amino acid availability. Interacts with YWHAE; required for the nuclear localization of KLHL22 upon amino acid starvation.

Its subcellular location is the cytoplasm. The protein localises to the cytosol. It is found in the cytoskeleton. It localises to the microtubule organizing center. The protein resides in the centrosome. Its subcellular location is the spindle. The protein localises to the nucleus. It is found in the lysosome. It functions in the pathway protein modification; protein ubiquitination. Its function is as follows. Substrate-specific adapter of a BCR (BTB-CUL3-RBX1) E3 ubiquitin ligase complex required for chromosome alignment and localization of PLK1 at kinetochores. The BCR(KLHL22) ubiquitin ligase complex mediates monoubiquitination of PLK1, leading to PLK1 dissociation from phosphoreceptor proteins and subsequent removal from kinetochores, allowing silencing of the spindle assembly checkpoint (SAC) and chromosome segregation. Monoubiquitination of PLK1 does not lead to PLK1 degradation. The BCR(KLHL22) ubiquitin ligase complex is also responsible for the amino acid-stimulated 'Lys-48' polyubiquitination and proteasomal degradation of DEPDC5. Through the degradation of DEPDC5, releases the GATOR1 complex-mediated inhibition of the TORC1 pathway. It is therefore an amino acid-dependent activator within the amino acid-sensing branch of the TORC1 pathway, indirectly regulating different cellular processes including cell growth and autophagy. This chain is Kelch-like protein 22, found in Rattus norvegicus (Rat).